The sequence spans 101 residues: Small ribosomal subunit protein uS14 (101 aa).

Belongs to the universal ribosomal protein uS14 family. In terms of assembly, part of the 30S ribosomal subunit. Contacts proteins S3 and S10.

In terms of biological role, binds 16S rRNA, required for the assembly of 30S particles and may also be responsible for determining the conformation of the 16S rRNA at the A site. This is Small ribosomal subunit protein uS14 from Roseobacter denitrificans (strain ATCC 33942 / OCh 114) (Erythrobacter sp. (strain OCh 114)).